The following is a 316-amino-acid chain: tRNA-cytidine(32) 2-sulfurtransferase (316 aa).

The PP-loop motif signature appears at 45-50 (SGGKDS). Residues Cys-120, Cys-123, and Cys-211 each contribute to the [4Fe-4S] cluster site.

The protein belongs to the TtcA family. Homodimer. It depends on Mg(2+) as a cofactor. [4Fe-4S] cluster serves as cofactor.

Its subcellular location is the cytoplasm. It catalyses the reaction cytidine(32) in tRNA + S-sulfanyl-L-cysteinyl-[cysteine desulfurase] + AH2 + ATP = 2-thiocytidine(32) in tRNA + L-cysteinyl-[cysteine desulfurase] + A + AMP + diphosphate + H(+). It participates in tRNA modification. Its function is as follows. Catalyzes the ATP-dependent 2-thiolation of cytidine in position 32 of tRNA, to form 2-thiocytidine (s(2)C32). The sulfur atoms are provided by the cysteine/cysteine desulfurase (IscS) system. The polypeptide is tRNA-cytidine(32) 2-sulfurtransferase (Shewanella sediminis (strain HAW-EB3)).